Here is a 267-residue protein sequence, read N- to C-terminus: Phosphate import ATP-binding protein PstB 2 (267 aa).

Positions 21–262 (LSTKDVHVYY…AKLQSTNDYV (242 aa)) constitute an ABC transporter domain. ATP is bound at residue 53–60 (GPSGSGKS).

The protein belongs to the ABC transporter superfamily. Phosphate importer (TC 3.A.1.7) family. The complex is composed of two ATP-binding proteins (PstB), two transmembrane proteins (PstC and PstA) and a solute-binding protein (PstS).

The protein localises to the cell membrane. It catalyses the reaction phosphate(out) + ATP + H2O = ADP + 2 phosphate(in) + H(+). In terms of biological role, part of the ABC transporter complex PstSACB involved in phosphate import. Responsible for energy coupling to the transport system. In Streptococcus pneumoniae serotype 4 (strain ATCC BAA-334 / TIGR4), this protein is Phosphate import ATP-binding protein PstB 2.